The sequence spans 221 residues: Thymidylate kinase (221 aa).

Position 10–17 (glycine 10–threonine 17) interacts with ATP.

The protein belongs to the thymidylate kinase family.

The catalysed reaction is dTMP + ATP = dTDP + ADP. Its function is as follows. Phosphorylation of dTMP to form dTDP in both de novo and salvage pathways of dTTP synthesis. The polypeptide is Thymidylate kinase (Desulforudis audaxviator (strain MP104C)).